The following is a 336-amino-acid chain: MNAPEILNGATAAAPAGTGEATPVHARARSPLTRREQKEAYENNKLFKRLARQVGEAIVDFNMIEDGDKVMVCLSGGKDSYAMLEILMRLRERAPINFDIVAVNLDQKQPGFPEHVLPEYLKQLDIPFHIENQDTYSIVKRLVPEGKTTCSLCSRLRRGILYRVAGELGATKIALGHHRDDILQTLLLNMFYGGKLKGMPPKLQSDDGKNIVIRPLAYVKETDLEKYAELREFPIIPCNLCGSQPNLKRAEMKALVRDWEKRFPGRIENMFNALANVVPSHLMDHKLFPFAGLRATGEADPQGDIAFDEEPCSTDSGNSTTLDGAKSIAIVQFDDL.

Low complexity predominate over residues 11 to 23; it reads TAAAPAGTGEATP. The interval 11 to 31 is disordered; that stretch reads TAAAPAGTGEATPVHARARSP. Residues 75-80 carry the PP-loop motif motif; the sequence is SGGKDS. Residues C150, C153, and C241 each contribute to the [4Fe-4S] cluster site.

Belongs to the TtcA family. As to quaternary structure, homodimer. It depends on Mg(2+) as a cofactor. [4Fe-4S] cluster serves as cofactor.

Its subcellular location is the cytoplasm. The enzyme catalyses cytidine(32) in tRNA + S-sulfanyl-L-cysteinyl-[cysteine desulfurase] + AH2 + ATP = 2-thiocytidine(32) in tRNA + L-cysteinyl-[cysteine desulfurase] + A + AMP + diphosphate + H(+). Its pathway is tRNA modification. Functionally, catalyzes the ATP-dependent 2-thiolation of cytidine in position 32 of tRNA, to form 2-thiocytidine (s(2)C32). The sulfur atoms are provided by the cysteine/cysteine desulfurase (IscS) system. The sequence is that of tRNA-cytidine(32) 2-sulfurtransferase from Paraburkholderia xenovorans (strain LB400).